A 444-amino-acid chain; its full sequence is Elongation factor 1-alpha (444 aa).

In terms of domain architecture, tr-type G spans 15–238; that stretch reads KPHINLAVVG…DSFQPPQRPV (224 aa). Residues 24 to 31 form a G1 region; the sequence is GHVDNGKS. 24–31 contacts GTP; sequence GHVDNGKS. S31 provides a ligand contact to Mg(2+). Residues 80–84 are G2; it reads GVTIE. Residues 101-104 form a G3 region; the sequence is DLPG. GTP-binding positions include 101-105 and 163-166; these read DLPGH and NKMD. The interval 163–166 is G4; it reads NKMD. The tract at residues 202-204 is G5; sequence SAI.

The protein belongs to the TRAFAC class translation factor GTPase superfamily. Classic translation factor GTPase family. EF-Tu/EF-1A subfamily.

Its subcellular location is the cytoplasm. The catalysed reaction is GTP + H2O = GDP + phosphate + H(+). Functionally, GTP hydrolase that promotes the GTP-dependent binding of aminoacyl-tRNA to the A-site of ribosomes during protein biosynthesis. The polypeptide is Elongation factor 1-alpha (Pyrobaculum aerophilum (strain ATCC 51768 / DSM 7523 / JCM 9630 / CIP 104966 / NBRC 100827 / IM2)).